A 420-amino-acid polypeptide reads, in one-letter code: Dynein axonemal assembly factor 4 (420 aa).

The region spanning 3 to 87 is the CS domain; it reads VRVSEFSWQQ…KEPVLWDSLS (85 aa). A mediates interaction with ESR1 and STUB1 region spans residues 7–103; sequence EFSWQQTPAT…EMMQRIREKS (97 aa). Basic and acidic residues predominate over residues 164–192; the sequence is ECQKKADGQKRVQRKEKPLEGKQAEETKA. Residues 164-212 form a disordered region; it reads ECQKKADGQKRVQRKEKPLEGKQAEETKALKPRGLPRKAPPTRLPTRGR. TPR repeat units follow at residues 288 to 321, 322 to 355, and 364 to 397; these read PDWL…NCKI, PLLY…LTPP, and MKAH…DPAN.

As to quaternary structure, interacts with ZMYND10. Interacts with ESR1 and ESR2. Interacts with STUB1. Interacts with DNAAF2. Interacts with CCT3, CCT4, CCT5 and CCT8. Interacts with DNAAF6/PIH1D3.

Its subcellular location is the nucleus. It localises to the cytoplasm. It is found in the dynein axonemal particle. The protein localises to the cell projection. The protein resides in the neuron projection. In terms of biological role, involved in neuronal migration during development of the cerebral neocortex. May regulate the stability and proteasomal degradation of the estrogen receptors that play an important role in neuronal differentiation, survival and plasticity. Axonemal dynein assembly factor required for ciliary motility. The chain is Dynein axonemal assembly factor 4 from Mus musculus (Mouse).